The chain runs to 261 residues: Kallikrein 1-related peptidase b21 (261 aa).

The first 17 residues, Met-1–Ala-17, serve as a signal peptide directing secretion. A propeptide spans Ala-18–Arg-24 (activation peptide). Residues Ile-25–Ala-258 enclose the Peptidase S1 domain. Intrachain disulfides connect Cys-31/Cys-173, Cys-50/Cys-66, Cys-152/Cys-219, Cys-184/Cys-198, and Cys-209/Cys-234. His-65 serves as the catalytic Charge relay system. An N-linked (GlcNAc...) asparagine glycan is attached at Asn-102. Asp-120 acts as the Charge relay system in catalysis. Ser-213 acts as the Charge relay system in catalysis.

This sequence belongs to the peptidase S1 family. Kallikrein subfamily. As to expression, expressed in testis and submaxillary gland. In the testis, expression localized specifically to Leydig cells in the interstitial tissues.

It catalyses the reaction Preferential cleavage of Arg-|-Xaa bonds in small molecule substrates. Highly selective action to release kallidin (lysyl-bradykinin) from kininogen involves hydrolysis of Met-|-Xaa or Leu-|-Xaa.. With respect to regulation, inhibited by protease inhibitors diisopropylfluorophosphate, leupeptin, antipain, benzamidine, phenylmethylsulfonyl fluoride and soybean trypsin inhibitor. Glandular kallikreins cleave Met-Lys and Arg-Ser bonds in kininogen to release Lys-bradykinin. Displays trypsin-like substrate specificity and shows activity towards casein, gelatin, fibronectin and IGFBP3. This chain is Kallikrein 1-related peptidase b21 (Klk1b21), found in Mus musculus (Mouse).